We begin with the raw amino-acid sequence, 228 residues long: Ribulose-phosphate 3-epimerase (228 aa).

Ser9 lines the substrate pocket. Residues His34, Asp36, His68, and Asp177 each contribute to the a divalent metal cation site. The Proton acceptor role is filled by Asp36. Substrate-binding positions include His68, 177-179 (DGG), and 199-200 (GS). The active-site Proton donor is Asp177.

The protein belongs to the ribulose-phosphate 3-epimerase family. The cofactor is a divalent metal cation.

It carries out the reaction D-ribulose 5-phosphate = D-xylulose 5-phosphate. The protein operates within carbohydrate degradation. Catalyzes the reversible epimerization of D-ribulose 5-phosphate to D-xylulose 5-phosphate. This Buchnera aphidicola subsp. Schizaphis graminum (strain Sg) protein is Ribulose-phosphate 3-epimerase.